A 121-amino-acid chain; its full sequence is Ribonuclease P protein component (121 aa).

Belongs to the RnpA family. As to quaternary structure, consists of a catalytic RNA component (M1 or rnpB) and a protein subunit.

It carries out the reaction Endonucleolytic cleavage of RNA, removing 5'-extranucleotides from tRNA precursor.. RNaseP catalyzes the removal of the 5'-leader sequence from pre-tRNA to produce the mature 5'-terminus. It can also cleave other RNA substrates such as 4.5S RNA. The protein component plays an auxiliary but essential role in vivo by binding to the 5'-leader sequence and broadening the substrate specificity of the ribozyme. This Neisseria meningitidis serogroup A / serotype 4A (strain DSM 15465 / Z2491) protein is Ribonuclease P protein component.